Reading from the N-terminus, the 41-residue chain is Large ribosomal subunit protein bL36 (41 aa).

Belongs to the bacterial ribosomal protein bL36 family.

This is Large ribosomal subunit protein bL36 from Brucella abortus (strain S19).